A 483-amino-acid chain; its full sequence is Protein nucleotidyltransferase YdiU (483 aa).

Residues G87, G89, R90, K110, D122, G123, R173, and R180 each contribute to the ATP site. The active-site Proton acceptor is the D249. Positions 250 and 259 each coordinate Mg(2+). An ATP-binding site is contributed by D259.

The protein belongs to the SELO family. The cofactor is Mg(2+). Requires Mn(2+) as cofactor.

The enzyme catalyses L-seryl-[protein] + ATP = 3-O-(5'-adenylyl)-L-seryl-[protein] + diphosphate. It carries out the reaction L-threonyl-[protein] + ATP = 3-O-(5'-adenylyl)-L-threonyl-[protein] + diphosphate. The catalysed reaction is L-tyrosyl-[protein] + ATP = O-(5'-adenylyl)-L-tyrosyl-[protein] + diphosphate. It catalyses the reaction L-histidyl-[protein] + UTP = N(tele)-(5'-uridylyl)-L-histidyl-[protein] + diphosphate. The enzyme catalyses L-seryl-[protein] + UTP = O-(5'-uridylyl)-L-seryl-[protein] + diphosphate. It carries out the reaction L-tyrosyl-[protein] + UTP = O-(5'-uridylyl)-L-tyrosyl-[protein] + diphosphate. Its function is as follows. Nucleotidyltransferase involved in the post-translational modification of proteins. It can catalyze the addition of adenosine monophosphate (AMP) or uridine monophosphate (UMP) to a protein, resulting in modifications known as AMPylation and UMPylation. This Yersinia pseudotuberculosis serotype O:1b (strain IP 31758) protein is Protein nucleotidyltransferase YdiU.